A 151-amino-acid chain; its full sequence is Cell division protein SepF (151 aa).

The tract at residues E31–N53 is disordered.

Belongs to the SepF family. As to quaternary structure, homodimer. Interacts with FtsZ.

The protein localises to the cytoplasm. Its function is as follows. Cell division protein that is part of the divisome complex and is recruited early to the Z-ring. Probably stimulates Z-ring formation, perhaps through the cross-linking of FtsZ protofilaments. Its function overlaps with FtsA. This Halalkalibacterium halodurans (strain ATCC BAA-125 / DSM 18197 / FERM 7344 / JCM 9153 / C-125) (Bacillus halodurans) protein is Cell division protein SepF.